Reading from the N-terminus, the 390-residue chain is GTPase Obg (390 aa).

Positions Met-1–Leu-159 constitute an Obg domain. In terms of domain architecture, OBG-type G spans Ala-160–Asn-333. Residues Gly-166–Ser-173, Phe-191–Ile-195, Asp-213–Gly-216, Asn-283–Asp-286, and Ser-314–Ala-316 each bind GTP. Ser-173 and Thr-193 together coordinate Mg(2+). Acidic residues predominate over residues Glu-363–Val-384. Positions Glu-363–Arg-390 are disordered.

The protein belongs to the TRAFAC class OBG-HflX-like GTPase superfamily. OBG GTPase family. In terms of assembly, monomer. It depends on Mg(2+) as a cofactor.

The protein resides in the cytoplasm. An essential GTPase which binds GTP, GDP and possibly (p)ppGpp with moderate affinity, with high nucleotide exchange rates and a fairly low GTP hydrolysis rate. Plays a role in control of the cell cycle, stress response, ribosome biogenesis and in those bacteria that undergo differentiation, in morphogenesis control. The protein is GTPase Obg of Yersinia enterocolitica serotype O:8 / biotype 1B (strain NCTC 13174 / 8081).